The primary structure comprises 77 residues: Translational regulator CsrA (77 aa).

A disordered region spans residues 58-77; sequence ANRRTAEETLDQASRLLSQK. A compositionally biased stretch (polar residues) spans 68–77; the sequence is DQASRLLSQK.

This sequence belongs to the CsrA/RsmA family. As to quaternary structure, homodimer; the beta-strands of each monomer intercalate to form a hydrophobic core, while the alpha-helices form wings that extend away from the core.

The protein resides in the cytoplasm. In terms of biological role, a translational regulator that binds mRNA to regulate translation initiation and/or mRNA stability. Usually binds in the 5'-UTR at or near the Shine-Dalgarno sequence preventing ribosome-binding, thus repressing translation. Its main target seems to be the major flagellin gene, while its function is anatagonized by FliW. The chain is Translational regulator CsrA from Magnetococcus marinus (strain ATCC BAA-1437 / JCM 17883 / MC-1).